A 94-amino-acid chain; its full sequence is Integration host factor subunit beta (94 aa).

The protein belongs to the bacterial histone-like protein family. In terms of assembly, heterodimer of an alpha and a beta chain.

Functionally, this protein is one of the two subunits of integration host factor, a specific DNA-binding protein that functions in genetic recombination as well as in transcriptional and translational control. In Aeromonas hydrophila subsp. hydrophila (strain ATCC 7966 / DSM 30187 / BCRC 13018 / CCUG 14551 / JCM 1027 / KCTC 2358 / NCIMB 9240 / NCTC 8049), this protein is Integration host factor subunit beta.